The chain runs to 201 residues: 3-isopropylmalate dehydratase small subunit (201 aa).

The protein belongs to the LeuD family. LeuD type 1 subfamily. Heterodimer of LeuC and LeuD.

It carries out the reaction (2R,3S)-3-isopropylmalate = (2S)-2-isopropylmalate. It participates in amino-acid biosynthesis; L-leucine biosynthesis; L-leucine from 3-methyl-2-oxobutanoate: step 2/4. Functionally, catalyzes the isomerization between 2-isopropylmalate and 3-isopropylmalate, via the formation of 2-isopropylmaleate. The polypeptide is 3-isopropylmalate dehydratase small subunit (Sinorhizobium medicae (strain WSM419) (Ensifer medicae)).